Reading from the N-terminus, the 94-residue chain is MKIRPLADRVVIKKVEAEEKTASGIVLPGAAKEQPQIAEVVEVGPGGIVEGKEIKMELTVGDKVIFQKYSGTEVKIEGQEYTILRQSDVLAVIE.

The protein belongs to the GroES chaperonin family. Heptamer of 7 subunits arranged in a ring. Interacts with the chaperonin GroEL.

The protein resides in the cytoplasm. Together with the chaperonin GroEL, plays an essential role in assisting protein folding. The GroEL-GroES system forms a nano-cage that allows encapsulation of the non-native substrate proteins and provides a physical environment optimized to promote and accelerate protein folding. GroES binds to the apical surface of the GroEL ring, thereby capping the opening of the GroEL channel. This chain is Co-chaperonin GroES, found in Clostridioides difficile (strain 630) (Peptoclostridium difficile).